Here is an 80-residue protein sequence, read N- to C-terminus: Raniseptin-1 (80 aa).

A signal peptide spans 1 to 22 (MAFLKKSLFLVLFLGIVSLSIC). Residues 23 to 49 (EEEKREGEEEEKQEEENEELSEEELRE) constitute a propeptide that is removed on maturation.

It belongs to the frog skin active peptide (FSAP) family. Dermaseptin subfamily. In terms of tissue distribution, expressed by the skin glands.

It localises to the secreted. Has antibacterial activity against the Gram-negative bacteria E.coli ATCC 25922 (MIC=5 uM), P.aeruginosa ATCC 27853 (MIC=10 uM) and X.citri (MIC&lt; 2 uM), and the Gram-positive bacterium S.aureus ATCC 29313 (MIC=20 uM). Does not have hemolytic activity against human erythrocytes. This Boana raniceps (Chaco tree frog) protein is Raniseptin-1.